Here is a 437-residue protein sequence, read N- to C-terminus: Ribosomal protein uS12 methylthiotransferase RimO (437 aa).

In terms of domain architecture, MTTase N-terminal spans 4 to 114 (PRISFVSLGC…VIEAVHTAIP (111 aa)). The [4Fe-4S] cluster site is built by Cys13, Cys49, Cys78, Cys145, Cys149, and Cys152. The region spanning 131–369 (LTPRHYAYLK…MAKQQQISTH (239 aa)) is the Radical SAM core domain. The TRAM domain occupies 372–437 (KKKIGKRLQV…DAYDLYGIAV (66 aa)).

It belongs to the methylthiotransferase family. RimO subfamily. It depends on [4Fe-4S] cluster as a cofactor.

The protein resides in the cytoplasm. It carries out the reaction L-aspartate(89)-[ribosomal protein uS12]-hydrogen + (sulfur carrier)-SH + AH2 + 2 S-adenosyl-L-methionine = 3-methylsulfanyl-L-aspartate(89)-[ribosomal protein uS12]-hydrogen + (sulfur carrier)-H + 5'-deoxyadenosine + L-methionine + A + S-adenosyl-L-homocysteine + 2 H(+). In terms of biological role, catalyzes the methylthiolation of an aspartic acid residue of ribosomal protein uS12. The sequence is that of Ribosomal protein uS12 methylthiotransferase RimO from Bartonella tribocorum (strain CIP 105476 / IBS 506).